Here is a 63-residue protein sequence, read N- to C-terminus: Beta-defensin 38 (63 aa).

Positions 1-21 (MKISCFLLLVLSLYLFQVNQA) are cleaved as a signal peptide. Intrachain disulfides connect Cys29/Cys58, Cys36/Cys51, and Cys41/Cys59.

Belongs to the beta-defensin family.

The protein resides in the secreted. Its function is as follows. Has antibacterial activity. The polypeptide is Beta-defensin 38 (Defb38) (Rattus norvegicus (Rat)).